The primary structure comprises 299 residues: Taste receptor type 2 member 4 (299 aa).

Topologically, residues 1 to 9 are extracellular; sequence MLRLFYFSA. The chain crosses the membrane as a helical span at residues 10–30; sequence VIASVILNFVGIIMNLFITVV. The Cytoplasmic segment spans residues 31-46; that stretch reads NCKTWVKSHRISSSDR. A helical transmembrane segment spans residues 47–67; the sequence is ILFSLGITRFLMLGLFLVNTI. The Extracellular portion of the chain corresponds to 68-81; sequence YFVSSNMERSVYLS. The helical transmembrane segment at 82–102 threads the bilayer; it reads AFFVLCFMFLDSSSLWFVTLL. Residues 103–131 are Cytoplasmic-facing; that stretch reads NILYCVKITNFQHSVFLLLKRSISPKIPR. The helical transmembrane segment at 132 to 152 threads the bilayer; it reads LLLAFVLISAFTTCLYITLSQ. Over 153-172 the chain is Extracellular; that stretch reads ASPFPELVTTRNNTSFNISE. 3 N-linked (GlcNAc...) asparagine glycosylation sites follow: Asn-164, Asn-165, and Asn-169. The chain crosses the membrane as a helical span at residues 173 to 193; that stretch reads GILSLVVSLVLSSSLQFIINV. At 194 to 230 the chain is on the cytoplasmic side; sequence TSASLLIHSLRRHIQKMQKNATGFWNPQMEAHVGAMK. A helical membrane pass occupies residues 231–251; that stretch reads LMVYFLILYIPYSVATLVQYL. Residues 252–262 are Extracellular-facing; that stretch reads PFYAGMDMGTK. Residues 263 to 283 form a helical membrane-spanning segment; it reads SICLIFATLYSPGHSVLIIIT. Topologically, residues 284 to 299 are cytoplasmic; that stretch reads HPKLKTTAKKILCFKK.

This sequence belongs to the G-protein coupled receptor T2R family.

It localises to the membrane. It is found in the cell projection. The protein resides in the cilium membrane. In terms of biological role, gustducin-coupled receptor implicated in the perception of bitter compounds in the oral cavity and the gastrointestinal tract. Signals through PLCB2 and the calcium-regulated cation channel TRPM5. In airway epithelial cells, binding of denatonium increases the intracellular calcium ion concentration and stimulates ciliary beat frequency. The sequence is that of Taste receptor type 2 member 4 (TAS2R4) from Gorilla gorilla gorilla (Western lowland gorilla).